The chain runs to 93 residues: UPF0367 protein gsr3177 (93 aa).

It belongs to the UPF0367 family.

The chain is UPF0367 protein gsr3177 from Gloeobacter violaceus (strain ATCC 29082 / PCC 7421).